Here is a 418-residue protein sequence, read N- to C-terminus: Acyl-coenzyme A amino acid N-acyltransferase 2 (418 aa).

Residues Ser-234, Asp-327, and His-361 each act as charge relay system in the active site. A Microbody targeting signal motif is present at residues 416 to 418 (GKL).

This sequence belongs to the C/M/P thioester hydrolase family.

Its subcellular location is the peroxisome. Its function is as follows. Acyltransferase which efficiently conjugates very long-chain and long-chain fatty acids to taurine. Shows no conjugation activity in the presence of glycine. The chain is Acyl-coenzyme A amino acid N-acyltransferase 2 from Rattus norvegicus (Rat).